Reading from the N-terminus, the 437-residue chain is GTPase Era, mitochondrial (437 aa).

A mitochondrion-targeting transit peptide spans 1–43 (MAAPSWRGARLVQSVLRVWQVGPHVARERVIPFSSLLGFQRRC). The Era-type G domain occupies 112 to 330 (RVLRVVLLGA…QYLLTQAQPG (219 aa)). Positions 120–127 (GAPNAGKS) are G1. GTP is bound at residue 120-127 (GAPNAGKS). Residues 146–150 (HTTRC) are G2. Positions 167–170 (DTPG) are G3. Residue 167 to 171 (DTPGI) coordinates GTP. At Ser-173 the chain carries Phosphoserine. GTP is bound at residue 236–239 (NKVD). The interval 236–239 (NKVD) is G4. The disordered stretch occupies residues 271 to 290 (HSHPGTHCPSPAVKDPNTQS). Residues 308-310 (LSA) form a G5 region. In terms of domain architecture, KH type-2 spans 360 to 437 (LPQEVPYNVQ…DIRLSVKLLK (78 aa)).

It belongs to the TRAFAC class TrmE-Era-EngA-EngB-Septin-like GTPase superfamily. Era GTPase family.

The protein localises to the mitochondrion matrix. It localises to the mitochondrion inner membrane. Functionally, probable GTPase that plays a role in the mitochondrial ribosomal small subunit assembly. Specifically binds the 12S mitochondrial rRNA (12S mt-rRNA) to a 33 nucleotide section delineating the 3' terminal stem-loop region. May act as a chaperone that protects the 12S mt-rRNA on the 28S mitoribosomal subunit during ribosomal small subunit assembly. This is GTPase Era, mitochondrial (ERAL1) from Homo sapiens (Human).